We begin with the raw amino-acid sequence, 129 residues long: Small ribosomal subunit protein uS11 (129 aa).

The protein belongs to the universal ribosomal protein uS11 family. Part of the 30S ribosomal subunit. Interacts with proteins S7 and S18. Binds to IF-3.

In terms of biological role, located on the platform of the 30S subunit, it bridges several disparate RNA helices of the 16S rRNA. Forms part of the Shine-Dalgarno cleft in the 70S ribosome. The protein is Small ribosomal subunit protein uS11 of Bartonella tribocorum (strain CIP 105476 / IBS 506).